Consider the following 936-residue polypeptide: Protein translocase subunit SecA (936 aa).

ATP is bound by residues Gln-87, 105-109, and Asp-515; that span reads GEGKT. Cys-920, Cys-922, Cys-931, and His-932 together coordinate Zn(2+).

This sequence belongs to the SecA family. Monomer and homodimer. Part of the essential Sec protein translocation apparatus which comprises SecA, SecYEG and auxiliary proteins SecDF-YajC and YidC. Requires Zn(2+) as cofactor.

The protein resides in the cell inner membrane. Its subcellular location is the cytoplasm. It carries out the reaction ATP + H2O + cellular proteinSide 1 = ADP + phosphate + cellular proteinSide 2.. Part of the Sec protein translocase complex. Interacts with the SecYEG preprotein conducting channel. Has a central role in coupling the hydrolysis of ATP to the transfer of proteins into and across the cell membrane, serving both as a receptor for the preprotein-SecB complex and as an ATP-driven molecular motor driving the stepwise translocation of polypeptide chains across the membrane. In Paraburkholderia phytofirmans (strain DSM 17436 / LMG 22146 / PsJN) (Burkholderia phytofirmans), this protein is Protein translocase subunit SecA.